We begin with the raw amino-acid sequence, 222 residues long: Ribonuclease 3 (222 aa).

One can recognise an RNase III domain in the interval 3 to 125 (SQSVAKKLNH…LFGAIYLDAG (123 aa)). Glu-38 provides a ligand contact to Mg(2+). Asp-42 is a catalytic residue. 2 residues coordinate Mg(2+): Asp-111 and Glu-114. Glu-114 is a catalytic residue. Positions 152–222 (DAKTRLQEWL…AEKALKELLA (71 aa)) constitute a DRBM domain.

The protein belongs to the ribonuclease III family. Homodimer. Mg(2+) is required as a cofactor.

It localises to the cytoplasm. The enzyme catalyses Endonucleolytic cleavage to 5'-phosphomonoester.. Its function is as follows. Digests double-stranded RNA. Involved in the processing of primary rRNA transcript to yield the immediate precursors to the large and small rRNAs (23S and 16S). Processes some mRNAs, and tRNAs when they are encoded in the rRNA operon. Processes pre-crRNA and tracrRNA of type II CRISPR loci if present in the organism. The polypeptide is Ribonuclease 3 (Dechloromonas aromatica (strain RCB)).